A 292-amino-acid polypeptide reads, in one-letter code: Pyridoxal 5'-phosphate synthase subunit PdxS (292 aa).

A D-ribose 5-phosphate-binding site is contributed by D22. The active-site Schiff-base intermediate with D-ribose 5-phosphate is K79. Residue G151 coordinates D-ribose 5-phosphate. Residue R163 coordinates D-glyceraldehyde 3-phosphate. D-ribose 5-phosphate is bound by residues G212 and 233-234 (GS).

This sequence belongs to the PdxS/SNZ family. In the presence of PdxT, forms a dodecamer of heterodimers.

The catalysed reaction is aldehydo-D-ribose 5-phosphate + D-glyceraldehyde 3-phosphate + L-glutamine = pyridoxal 5'-phosphate + L-glutamate + phosphate + 3 H2O + H(+). Its pathway is cofactor biosynthesis; pyridoxal 5'-phosphate biosynthesis. In terms of biological role, catalyzes the formation of pyridoxal 5'-phosphate from ribose 5-phosphate (RBP), glyceraldehyde 3-phosphate (G3P) and ammonia. The ammonia is provided by the PdxT subunit. Can also use ribulose 5-phosphate and dihydroxyacetone phosphate as substrates, resulting from enzyme-catalyzed isomerization of RBP and G3P, respectively. The protein is Pyridoxal 5'-phosphate synthase subunit PdxS of Thermoanaerobacter sp. (strain X514).